The following is a 204-amino-acid chain: MAGSKQIFGADELDLVANYLQAGGVLAYPSESVWGLGCDAFNTDAINQIINLKHRDIGKGLIVLTDAAERLKSLIDVSHETSLLDYMQNFSDEFTHKHSRALTWLMPIQSSVLPSVLIGSHDTLAVRITTHPLLKDLCHALISPTNPYGFLVSTSCNLSKSTPAKNLTQAMGYFGDQIAYLDTDGLGFAQPSCIKDLLAGHILR.

Positions 10–204 (ADELDLVANY…KDLLAGHILR (195 aa)) constitute a YrdC-like domain.

The protein belongs to the SUA5 family. TsaC subfamily.

The protein resides in the cytoplasm. It catalyses the reaction L-threonine + hydrogencarbonate + ATP = L-threonylcarbamoyladenylate + diphosphate + H2O. In terms of biological role, required for the formation of a threonylcarbamoyl group on adenosine at position 37 (t(6)A37) in tRNAs that read codons beginning with adenine. Catalyzes the conversion of L-threonine, HCO(3)(-)/CO(2) and ATP to give threonylcarbamoyl-AMP (TC-AMP) as the acyladenylate intermediate, with the release of diphosphate. The polypeptide is Threonylcarbamoyl-AMP synthase (Moraxella catarrhalis (strain BBH18)).